A 198-amino-acid polypeptide reads, in one-letter code: Recombination protein RecR (198 aa).

The segment at 56-71 (CTECRDFSETKICAIC) adopts a C4-type zinc-finger fold. Residues 79 to 174 (HQLCVVESPP…RPSRLAQGLP (96 aa)) form the Toprim domain.

The protein belongs to the RecR family.

Its function is as follows. May play a role in DNA repair. It seems to be involved in an RecBC-independent recombinational process of DNA repair. It may act with RecF and RecO. The chain is Recombination protein RecR from Xylella fastidiosa (strain Temecula1 / ATCC 700964).